Here is a 659-residue protein sequence, read N- to C-terminus: uncharacterized protein (659 aa).

The next 16 helical transmembrane spans lie at 24–44 (TTLMVAGLLGNVVAVAAYGLF), 71–91 (FGASLSSALCLGALIYFVMMV), 115–135 (IGWLAFALTMVVVQAANDSGV), 157–177 (RAWIVVTICALLVTLTLRVII), 183–203 (FVLLIPAVIGVIATAVTGNAG), 214–234 (AVIVFALAIAALSGLKITAAL), 242–262 (AVLIVQVVCGVLALAYGAELV), 279–299 (LGLVAGVLVTLVCFSDCWALV), 311–331 (LTALAMMAVTAATAAMSVQTA), 365–385 (FDSLIGATAIVLGIGYVAGFV), 393–413 (TWPVGRLVAWLTGCVALVFTS), 433–453 (MTLNMFIPVLLVLGGPVTLAL), 490–510 (FILFVGSPYIVYFTPLFDTLV), 517–537 (EFMAIHFLLVGYIFYWAIIGI), 550–570 (IGLLFAVMPFHAFFGIALMTM), and 596–616 (IGGAIAWSATELPVIIVIVAL).

The protein to M.tuberculosis Rv0102.

Its subcellular location is the cell membrane. This is an uncharacterized protein from Mycobacterium leprae (strain TN).